Consider the following 150-residue polypeptide: MVGLSIVLEMTNNNNNNNNNNNNNNNKNPLSEGVLISPKVVNKANIIVTTAVTTDTTNLRRCYQDSGFLEHCFLCRRKLLPAKDIYMYKGDRAFCSVECRSKQMIMDEEESLRREYCSLMDVKKKKFDSPATAPSRYRRDPRNQAGGFAY.

A compositionally biased stretch (low complexity) spans 12-28 (NNNNNNNNNNNNNNNKN). The disordered stretch occupies residues 12-31 (NNNNNNNNNNNNNNNKNPLS). The FLZ-type zinc finger occupies 67-111 (GFLEHCFLCRRKLLPAKDIYMYKGDRAFCSVECRSKQMIMDEEES). The tract at residues 129-150 (SPATAPSRYRRDPRNQAGGFAY) is disordered.

Belongs to the FLZ family. In terms of assembly, interacts with KIN10 and KIN11 via its FLZ-type zinc finger domain. Interacts with KINB1 and KINB3 via its N-terminal part. Forms homodimer and heterodimer with FLZ1, FLZ2 and FLZ7 in vitro.

The protein resides in the cytoplasm. The protein localises to the P-body. In terms of biological role, may act as an adapter to facilitate the interaction of SnRK1 complex with effector proteins, conferring tissue- and stimulus-type specific differences in the SnRK1 regulation pathway. The sequence is that of FCS-Like Zinc finger 15 from Arabidopsis thaliana (Mouse-ear cress).